Here is a 343-residue protein sequence, read N- to C-terminus: Nod factor export ATP-binding protein I (343 aa).

Over residues 1 to 14 (MQLLTRANVSSSPS) the composition is skewed to polar residues. The tract at residues 1–38 (MQLLTRANVSSSPSRRPESNALKQKCHGHSNADNSLSR) is disordered. The ABC transporter domain occupies 45–275 (IELTNVSKSY…QIGCDVIEIY (231 aa)). Residue 77–84 (GPNGAGKS) coordinates ATP.

Belongs to the ABC transporter superfamily. Lipooligosaccharide exporter (TC 3.A.1.102) family. In terms of assembly, the complex is composed of two ATP-binding proteins (NodI) and two transmembrane proteins (NodJ).

Its subcellular location is the cell inner membrane. Functionally, part of the ABC transporter complex NodIJ involved in the export of the nodulation factors (Nod factors), the bacterial signal molecules that induce symbiosis and subsequent nodulation induction. Nod factors are LCO (lipo-chitin oligosaccharide), a modified beta-1,4-linked N-acetylglucosamine oligosaccharide. This subunit is responsible for energy coupling to the transport system. In Sinorhizobium fredii (strain NBRC 101917 / NGR234), this protein is Nod factor export ATP-binding protein I.